Consider the following 205-residue polypeptide: Small ribosomal subunit protein uS4 (205 aa).

The segment covering 1-16 has biased composition (basic and acidic residues); it reads MSKRESSKYKIDRRMG. The interval 1 to 46 is disordered; sequence MSKRESSKYKIDRRMGENIWGRPKSPVNRREYGPGQHGQRRKGKLS. Residues 94–157 enclose the S4 RNA-binding domain; it reads SRLDAIVYRA…KQLVTVLEAV (64 aa).

This sequence belongs to the universal ribosomal protein uS4 family. Part of the 30S ribosomal subunit. Contacts protein S5. The interaction surface between S4 and S5 is involved in control of translational fidelity.

Functionally, one of the primary rRNA binding proteins, it binds directly to 16S rRNA where it nucleates assembly of the body of the 30S subunit. In terms of biological role, with S5 and S12 plays an important role in translational accuracy. The protein is Small ribosomal subunit protein uS4 of Rhizobium etli (strain ATCC 51251 / DSM 11541 / JCM 21823 / NBRC 15573 / CFN 42).